The chain runs to 480 residues: 6-phosphogluconate dehydrogenase, decarboxylating (480 aa).

Residues 11–16 (GLAVMG), 34–36 (NRS), 76–78 (IKA), and N104 each bind NADP(+). Residues N104 and 130–132 (SGG) each bind substrate. The active-site Proton acceptor is the K184. Residue 187 to 188 (HN) participates in substrate binding. E191 serves as the catalytic Proton donor. Y192, K261, R288, R448, and H454 together coordinate substrate.

Belongs to the 6-phosphogluconate dehydrogenase family. As to quaternary structure, homodimer.

The catalysed reaction is 6-phospho-D-gluconate + NADP(+) = D-ribulose 5-phosphate + CO2 + NADPH. It functions in the pathway carbohydrate degradation; pentose phosphate pathway; D-ribulose 5-phosphate from D-glucose 6-phosphate (oxidative stage): step 3/3. Catalyzes the oxidative decarboxylation of 6-phosphogluconate to ribulose 5-phosphate and CO(2), with concomitant reduction of NADP to NADPH. This chain is 6-phosphogluconate dehydrogenase, decarboxylating (gnd), found in Chlamydia trachomatis serovar D (strain ATCC VR-885 / DSM 19411 / UW-3/Cx).